The chain runs to 837 residues: Amyloid-beta A4 precursor protein-binding family A member 1 (837 aa).

Disordered stretches follow at residues 1–93 (MNHL…DTAE), 238–342 (YDER…SKEK), and 358–435 (EEVK…ESRK). Positions 23–38 (ESVEADLEHPEVEEEQ) are enriched in acidic residues. Phosphoserine occurs at positions 78, 242, 246, 248, 263, 280, and 285. Residues 226–314 (YRQEALGARL…TPAGGRPDSP (89 aa)) form a munc-18-1 binding region. A compositionally biased stretch (basic and acidic residues) spans 238 to 254 (YDERSDGESDSPEKEAE). Position 305 is a phosphothreonine (T305). 2 positions are modified to phosphoserine: S313 and S367. T370 is modified (phosphothreonine). The interval 373 to 436 (EPKEPIWVMR…ASTNKESRKS (64 aa)) is LIN-2/CASK binding. Over residues 387–398 (PTRDCDDQRPMD) the composition is skewed to basic and acidic residues. Residues 399 to 418 (GDSPSPGSSSPLGAESSSTS) show a composition bias toward low complexity. Phosphoserine is present on residues S401, S403, S408, and S568. The PID domain maps to 457-643 (DGIIFAANYL…LLNTQDMYND (187 aa)). Residues 626-641 (LSQKEYSDLLNTQDMY) are autoinhibitory helix linker. 2 consecutive PDZ domains span residues 656 to 742 (DVFI…IVRC) and 747 to 822 (TVLI…TMPA).

Part of a multimeric complex containing STXBP1 and STX1A. Interacts with STXBP1. Also part of the brain-specific heterotrimeric complex LIN-10/X11-alpha, LIN-2/CASK, and LIN7. Component of the brain-specific heterotrimeric complex (LIN-10-LIN-2-LIN-7 complex) composed of at least APBA1, CASK, and LIN7, which associates with the motor protein KIF17 to transport vesicles along microtubules. Within the complex, interacts (via PDZ domain) with the motor protein KIF17; the interaction is direct and is required for association of KIF17 with the cargo that is to be transported. Both isoform 1 and isoform 2 bind to the cytoplasmic domain of amyloid protein (APP). Interacts (via PDZ 1 and 2 domains) with FSPB. Isoform 2, but not isoform 1, interacts (via its truncated PID domain) with active, GTP-bound RAB6A and RAB6B. Brain and spinal cord. Isoform 2 is expressed in testis and brain, but not detected in lung, liver or spleen.

It is found in the cytoplasm. The protein resides in the perinuclear region. Its subcellular location is the nucleus. The protein localises to the golgi apparatus. In terms of biological role, putative function in synaptic vesicle exocytosis by binding to Munc18-1, an essential component of the synaptic vesicle exocytotic machinery. May modulate processing of the amyloid-beta precursor protein (APP) and hence formation of APP-beta. Component of the LIN-10-LIN-2-LIN-7 complex, which associates with the motor protein KIF17 to transport vesicles containing N-methyl-D-aspartate (NMDA) receptor subunit NR2B along microtubules. The polypeptide is Amyloid-beta A4 precursor protein-binding family A member 1 (APBA1) (Homo sapiens (Human)).